A 57-amino-acid chain; its full sequence is Potassium channel toxin alpha-KTx 8.5 (57 aa).

The first 28 residues, M1–A28, serve as a signal peptide directing secretion. 3 cysteine pairs are disulfide-bonded: C31-C47, C34-C52, and C38-C54.

This sequence belongs to the short scorpion toxin superfamily. Potassium channel inhibitor family. Alpha-KTx 08 subfamily. In terms of tissue distribution, expressed by the venom gland.

Its subcellular location is the secreted. Selectively inhibits voltage-gated potassium channels Kv1.2/KCNA2 (IC(50)=183 nM). The protein is Potassium channel toxin alpha-KTx 8.5 of Odontobuthus doriae (Yellow Iranian scorpion).